The following is a 1448-amino-acid chain: DNA-directed RNA polymerase subunit beta' (1448 aa).

Zn(2+)-binding residues include Cys-66, Cys-68, Cys-81, and Cys-84. Residues Asp-474, Asp-476, and Asp-478 each contribute to the Mg(2+) site. Residues Cys-814, Cys-888, Cys-895, and Cys-898 each coordinate Zn(2+). The interval Leu-1408 to Asn-1448 is disordered.

It belongs to the RNA polymerase beta' chain family. As to quaternary structure, the RNAP catalytic core consists of 2 alpha, 1 beta, 1 beta' and 1 omega subunit. When a sigma factor is associated with the core the holoenzyme is formed, which can initiate transcription. Mg(2+) is required as a cofactor. The cofactor is Zn(2+).

The catalysed reaction is RNA(n) + a ribonucleoside 5'-triphosphate = RNA(n+1) + diphosphate. Functionally, DNA-dependent RNA polymerase catalyzes the transcription of DNA into RNA using the four ribonucleoside triphosphates as substrates. The chain is DNA-directed RNA polymerase subunit beta' from Salinibacter ruber (strain DSM 13855 / M31).